A 483-amino-acid polypeptide reads, in one-letter code: Keratin, type II cytoskeletal 8 (483 aa).

The span at 1–25 (MSVRVTQKSYKMSTSGPRAFSSRSF) shows a compositional bias: polar residues. A disordered region spans residues 1–43 (MSVRVTQKSYKMSTSGPRAFSSRSFTSGPGARISSSSFSRVGS). Positions 1-90 (MSVRVTQKSY…DPNIQAVRTQ (90 aa)) are head. Ser-9 is modified (phosphoserine; by PKC/PRKCE). Lys-11 is covalently cross-linked (Glycyl lysine isopeptide (Lys-Gly) (interchain with G-Cter in SUMO2)). Phosphoserine occurs at positions 13, 15, 21, and 22. At Arg-23 the chain carries Omega-N-methylarginine. Ser-24 carries the phosphoserine; by PKC/PRKCE modification. Ser-24 carries the post-translational modification Phosphoserine. Phosphothreonine is present on Thr-26. The span at 26–43 (TSGPGARISSSSFSRVGS) shows a compositional bias: low complexity. Ser-27 carries the post-translational modification Phosphoserine. Arg-32 carries the post-translational modification Omega-N-methylarginine. Phosphoserine occurs at positions 34, 37, and 39. At Arg-40 the chain carries Omega-N-methylarginine. 3 positions are modified to phosphoserine: Ser-43, Ser-44, and Ser-47. Arg-49 is subject to Asymmetric dimethylarginine; alternate. Residue Arg-49 is modified to Omega-N-methylarginine; alternate. Residue Ser-51 is modified to Phosphoserine. The coil 1A stretch occupies residues 91–126 (EKEQIKTLNNKFASFIDKVRFLEQQNKMLETKWSLL). Positions 91–402 (EKEQIKTLNN…KLLEGEESRL (312 aa)) constitute an IF rod domain. An N6-malonyllysine modification is found at Lys-101. Residues Lys-122 and Lys-130 each participate in a glycyl lysine isopeptide (Lys-Gly) (interchain with G-Cter in SUMO2) cross-link. Positions 127-143 (QQQKTSRSNMDNMFESY) are linker 1. Positions 144–235 (INNLRRQLEA…QIHEEEIREL (92 aa)) are coil 1B. A Glycyl lysine isopeptide (Lys-Gly) (interchain with G-Cter in SUMO1); alternate cross-link involves residue Lys-197. Lys-197 is covalently cross-linked (Glycyl lysine isopeptide (Lys-Gly) (interchain with G-Cter in SUMO2); alternate). An N6-acetyllysine modification is found at Lys-207. Residues 236-259 (QSQISDTSVVLSMDNSRSLDMDSI) form a linker 12 region. Phosphoserine occurs at positions 253, 258, and 274. Residues 260–398 (IAEVRAQYEE…ATYRKLLEGE (139 aa)) form a coil 2 region. The necessary for interaction with PNN stretch occupies residues 261-382 (AEVRAQYEEI…EYQELMNVKL (122 aa)). Residue Lys-285 forms a Glycyl lysine isopeptide (Lys-Gly) (interchain with G-Cter in SUMO2) linkage. A Glycyl lysine isopeptide (Lys-Gly) (interchain with G-Cter in SUMO2); alternate cross-link involves residue Lys-295. N6-acetyllysine; alternate is present on Lys-295. Residue Lys-304 forms a Glycyl lysine isopeptide (Lys-Gly) (interchain with G-Cter in SUMO2) linkage. Lys-325 is covalently cross-linked (Glycyl lysine isopeptide (Lys-Gly) (interchain with G-Cter in SUMO2); alternate). N6-acetyllysine; alternate is present on Lys-325. Residue Lys-393 forms a Glycyl lysine isopeptide (Lys-Gly) (interchain with G-Cter in SUMO2) linkage. The segment at 399-483 (ESRLESGMQN…VSESSDIMSK (85 aa)) is tail. A phosphoserine mark is found at Ser-400, Ser-404, Ser-410, Ser-417, Ser-424, Ser-426, and Ser-432. A Glycyl lysine isopeptide (Lys-Gly) (interchain with G-Cter in SUMO1); alternate cross-link involves residue Lys-472. Residue Lys-472 forms a Glycyl lysine isopeptide (Lys-Gly) (interchain with G-Cter in SUMO2); alternate linkage. Ser-475, Ser-477, Ser-478, and Ser-482 each carry phosphoserine.

This sequence belongs to the intermediate filament family. Heterotetramer of two type I and two type II keratins. Forms a heterodimer with KRT18. Associates with KRT20. Interacts with PNN. When associated with KRT19, interacts with DMD. Interacts with TCHP. Interacts with APEX1. Interacts with GPER1. Interacts with EPPK1. Interacts with PKP1 and PKP2. In terms of processing, O-glycosylated. O-GlcNAcylation at multiple sites increases solubility, and decreases stability by inducing proteasomal degradation. O-glycosylated (O-GlcNAcylated), in a cell cycle-dependent manner. Expressed in cardiac and striated muscle. Expressed at Z-lines within the muscle fibers and at Z-line and M-line domains at costameres at the sarcolemmal membrane (at protein level). Observed in coagulating gland, bladder, salivary gland, kidney, spleen, thymus, lung and heart. Also observed in ventral prostate, seminal vesicle and liver where expression increases following castration.

It is found in the cytoplasm. The protein localises to the nucleus. The protein resides in the nucleoplasm. It localises to the nucleus matrix. Functionally, together with KRT19, helps to link the contractile apparatus to dystrophin at the costameres of striated muscle. In Rattus norvegicus (Rat), this protein is Keratin, type II cytoskeletal 8 (Krt8).